Reading from the N-terminus, the 124-residue chain is Conotoxin Cl14.12 (124 aa).

The N-terminal stretch at 1 to 17 (MKVAVVLLVSLLAVTYA) is a signal peptide. Positions 18–74 (LPEKRIFFGGIVDKVKDTFTKIFNKAKETFDKITDGFDVDFDEVVDKLIAQIHSTPT) are excised as a propeptide.

Contains 2 disulfide bond. In terms of tissue distribution, expressed by the venom duct.

The protein localises to the secreted. The sequence is that of Conotoxin Cl14.12 from Californiconus californicus (California cone).